The primary structure comprises 301 residues: Pyridoxal 5'-phosphate synthase subunit PdxS (301 aa).

Asp31 lines the D-ribose 5-phosphate pocket. The Schiff-base intermediate with D-ribose 5-phosphate role is filled by Lys88. Residue Gly160 coordinates D-ribose 5-phosphate. Lys172 is a binding site for D-glyceraldehyde 3-phosphate. D-ribose 5-phosphate-binding positions include Gly221 and Gly242 to Ser243.

Belongs to the PdxS/SNZ family. As to quaternary structure, in the presence of PdxT, forms a dodecamer of heterodimers.

The catalysed reaction is aldehydo-D-ribose 5-phosphate + D-glyceraldehyde 3-phosphate + L-glutamine = pyridoxal 5'-phosphate + L-glutamate + phosphate + 3 H2O + H(+). It functions in the pathway cofactor biosynthesis; pyridoxal 5'-phosphate biosynthesis. In terms of biological role, catalyzes the formation of pyridoxal 5'-phosphate from ribose 5-phosphate (RBP), glyceraldehyde 3-phosphate (G3P) and ammonia. The ammonia is provided by the PdxT subunit. Can also use ribulose 5-phosphate and dihydroxyacetone phosphate as substrates, resulting from enzyme-catalyzed isomerization of RBP and G3P, respectively. The chain is Pyridoxal 5'-phosphate synthase subunit PdxS from Methanosarcina mazei (strain ATCC BAA-159 / DSM 3647 / Goe1 / Go1 / JCM 11833 / OCM 88) (Methanosarcina frisia).